The chain runs to 261 residues: HTH-type transcriptional repressor CsqR (261 aa).

The region spanning 8 to 63 is the HTH deoR-type domain; sequence GNPRHDQLLMLIAERGYMNIDELANLLDVSTQTVRRDIRKLSEQGLITRHHGGAGR. Positions 25 to 44 form a DNA-binding region, H-T-H motif; that stretch reads MNIDELANLLDVSTQTVRRD.

As to quaternary structure, monomer in the absence of DNA. Exhibits a high level of cooperativity once it is bound to its target DNA.

Inactivated in the presence of the effectors sulfoquinovose and sulfoquinovosyl glycerol, leading to the de-repression of the target genes. Functionally, involved in the regulation of the sulfoquinovose operon. Represses the expression of the yihUTS operon and of the yihV and csqR genes. Binds DNA inside the spacer between the bidirectional transcription units comprising the yihUTS operon and the yihV gene, and upstream the csqR gene itself. The chain is HTH-type transcriptional repressor CsqR from Escherichia coli (strain K12).